Consider the following 237-residue polypeptide: Tyrosine-protein kinase YwqD (237 aa).

Position 228 is a phosphotyrosine; by autocatalysis (Tyr-228).

This sequence belongs to the CpsD/CapB family. Post-translationally, autophosphorylated in vitro, which inhibits ATPase activity. Dephosphorylated by YwqE in vitro.

The enzyme catalyses L-tyrosyl-[protein] + ATP = O-phospho-L-tyrosyl-[protein] + ADP + H(+). Functionally, may be involved in the regulation of capsular polysaccharide biosynthesis. Autophosphorylates in vitro. Phosphorylates and activates in vitro two UDP-glucose dehydrogenases, YwqF and TuaD, as well as the DNA-binding proteins Ssb and SsbB. This chain is Tyrosine-protein kinase YwqD (ywqD), found in Bacillus subtilis (strain 168).